Consider the following 89-residue polypeptide: Small ribosomal subunit protein uS15 (89 aa).

This sequence belongs to the universal ribosomal protein uS15 family. Part of the 30S ribosomal subunit. Forms a bridge to the 50S subunit in the 70S ribosome, contacting the 23S rRNA.

One of the primary rRNA binding proteins, it binds directly to 16S rRNA where it helps nucleate assembly of the platform of the 30S subunit by binding and bridging several RNA helices of the 16S rRNA. Functionally, forms an intersubunit bridge (bridge B4) with the 23S rRNA of the 50S subunit in the ribosome. This is Small ribosomal subunit protein uS15 from Frankia casuarinae (strain DSM 45818 / CECT 9043 / HFP020203 / CcI3).